Reading from the N-terminus, the 204-residue chain is NAD(P)H dehydrogenase (quinone) (204 aa).

Residues 4 to 195 (IQIVFYSMYG…AIARFQGAHV (192 aa)) enclose the Flavodoxin-like domain. FMN contacts are provided by residues 10-15 (SMYGHI) and 83-85 (TRF). Position 12 (Tyr12) interacts with NAD(+). Trp103 serves as a coordination point for substrate. FMN-binding positions include 118-124 (STATQHG) and His139.

It belongs to the WrbA family. The cofactor is FMN.

The catalysed reaction is a quinone + NADH + H(+) = a quinol + NAD(+). It carries out the reaction a quinone + NADPH + H(+) = a quinol + NADP(+). In Trichlorobacter lovleyi (strain ATCC BAA-1151 / DSM 17278 / SZ) (Geobacter lovleyi), this protein is NAD(P)H dehydrogenase (quinone).